The primary structure comprises 382 residues: Type II secretion system protein L (382 aa).

Over 1–233 (MSGVSALFLP…QQSSQWRRWR (233 aa)) the chain is Cytoplasmic. A helical transmembrane segment spans residues 234–254 (PLLGLVGLWLVLQWGFTLVQA). At 255-382 (WQLQREGDRY…TVSARLVIGG (128 aa)) the chain is on the periplasmic side.

Belongs to the GSP L family. As to quaternary structure, type II secretion system is composed of four main components: the outer membrane complex, the inner membrane complex, the cytoplasmic secretion ATPase and the periplasm-spanning pseudopilus. Forms homodimers. Interacts with XcpZ/GspM. Interacts with XcpR/GspE and XcpS/GspF.

Its subcellular location is the cell inner membrane. Functionally, inner membrane component of the type II secretion system required for the energy-dependent secretion of extracellular factors such as proteases and toxins from the periplasm. Plays a role in the complex assembly and recruits XcpZ resulting in a stable complex in the inner membrane. Provides thus a link between the energy-providing XcpR protein in the cytoplasm and the rest of the T2SS machinery. The sequence is that of Type II secretion system protein L (xcpY) from Pseudomonas aeruginosa (strain ATCC 15692 / DSM 22644 / CIP 104116 / JCM 14847 / LMG 12228 / 1C / PRS 101 / PAO1).